A 230-amino-acid chain; its full sequence is ATP synthase subunit a (230 aa).

6 helical membrane passes run 16 to 36 (LVLF…WLSI), 73 to 93 (WVSA…LGLL), 106 to 126 (TYSI…YLAF), 142 to 162 (LIPF…IALG), 165 to 185 (LAAN…AIWT), and 192 to 212 (IASI…GVAC).

It belongs to the ATPase A chain family. In terms of assembly, F-type ATPases have 2 components, CF(1) - the catalytic core - and CF(0) - the membrane proton channel. CF(1) has five subunits: alpha(3), beta(3), gamma(1), delta(1), epsilon(1). CF(0) has three main subunits: a, b and c.

The protein localises to the mitochondrion inner membrane. In terms of biological role, mitochondrial membrane ATP synthase (F(1)F(0) ATP synthase or Complex V) produces ATP from ADP in the presence of a proton gradient across the membrane which is generated by electron transport complexes of the respiratory chain. F-type ATPases consist of two structural domains, F(1) - containing the extramembraneous catalytic core and F(0) - containing the membrane proton channel, linked together by a central stalk and a peripheral stalk. During catalysis, ATP synthesis in the catalytic domain of F(1) is coupled via a rotary mechanism of the central stalk subunits to proton translocation. Key component of the proton channel; it may play a direct role in the translocation of protons across the membrane. This chain is ATP synthase subunit a (ATP6), found in Patiria pectinifera (Starfish).